A 55-amino-acid chain; its full sequence is MSLGPWQLFLVLIIILVLFGAGRLPQVMGDLGKGIKNLKQELKDSEKLSSNEPDR.

The chain crosses the membrane as a helical span at residues 1–21; sequence MSLGPWQLFLVLIIILVLFGA.

This sequence belongs to the TatA/E family. The Tat system comprises two distinct complexes: a TatABC complex, containing multiple copies of TatA, TatB and TatC subunits, and a separate TatA complex, containing only TatA subunits. Substrates initially bind to the TatABC complex, which probably triggers association of the separate TatA complex to form the active translocon.

The protein localises to the cell membrane. Functionally, part of the twin-arginine translocation (Tat) system that transports large folded proteins containing a characteristic twin-arginine motif in their signal peptide across membranes. TatA could form the protein-conducting channel of the Tat system. This chain is Sec-independent protein translocase protein TatA, found in Wolbachia pipientis wMel.